The following is a 297-amino-acid chain: Protease HtpX homolog (297 aa).

Helical transmembrane passes span 5–25 (IFLFLLSNILVITTIGIVLSI) and 44–64 (IVALLVFSAVVGFVGSFMSLL). A Zn(2+)-binding site is contributed by His155. Residue Glu156 is part of the active site. His159 lines the Zn(2+) pocket. The next 2 helical transmembrane spans lie at 170–190 (LLQGIVNTFVVFFARIAAWAV) and 204–224 (FIAVIVFQIVFSILGSLVVFA). Glu230 serves as a coordination point for Zn(2+).

It belongs to the peptidase M48B family. Requires Zn(2+) as cofactor.

It localises to the cell membrane. This is Protease HtpX homolog from Bacillus licheniformis (strain ATCC 14580 / DSM 13 / JCM 2505 / CCUG 7422 / NBRC 12200 / NCIMB 9375 / NCTC 10341 / NRRL NRS-1264 / Gibson 46).